A 68-amino-acid polypeptide reads, in one-letter code: Metallothionein-3 (68 aa).

M1 is modified (N-acetylmethionine). Positions 1–30 (MDPETCPCPSGGSCTCADSCKCEGCKCTSC) are beta. 9 residues coordinate a divalent metal cation: C6, C8, C14, C16, C20, C22, C25, C27, and C30. The tract at residues 31 to 68 (KKSCCSCCPAECEKCAKDCVCKGGEGAEAEAEKCSCCE) is alpha. Position 33 is a phosphoserine (S33). A divalent metal cation contacts are provided by C34, C35, C37, C38, C42, C45, C49, C51, C64, C66, and C67.

The protein belongs to the metallothionein superfamily. Type 1 family.

Its function is as follows. Binds heavy metals. Contains five zinc and one copper atoms per polypeptide chain and only a negligible amount of cadmium. The chain is Metallothionein-3 (MT3) from Macaca fascicularis (Crab-eating macaque).